Reading from the N-terminus, the 130-residue chain is Large ribosomal subunit protein uL14 (130 aa).

The protein belongs to the universal ribosomal protein uL14 family. Part of the 50S ribosomal subunit. Forms a cluster with proteins L3 and L19. In the 70S ribosome, L14 and L19 interact and together make contacts with the 16S rRNA in bridges B5 and B8.

In terms of biological role, binds to 23S rRNA. Forms part of two intersubunit bridges in the 70S ribosome. The polypeptide is Large ribosomal subunit protein uL14 (Leptospira biflexa serovar Patoc (strain Patoc 1 / Ames)).